Reading from the N-terminus, the 522-residue chain is Peptide chain release factor 3 (522 aa).

Positions 10-277 (ASRKTFAIIS…TFVDFAPSPS (268 aa)) constitute a tr-type G domain. GTP is bound by residues 19–26 (SHPDAGKT), 87–91 (DTPGH), and 141–144 (NKMD).

It belongs to the TRAFAC class translation factor GTPase superfamily. Classic translation factor GTPase family. PrfC subfamily.

Its subcellular location is the cytoplasm. Increases the formation of ribosomal termination complexes and stimulates activities of RF-1 and RF-2. It binds guanine nucleotides and has strong preference for UGA stop codons. It may interact directly with the ribosome. The stimulation of RF-1 and RF-2 is significantly reduced by GTP and GDP, but not by GMP. In Listeria innocua serovar 6a (strain ATCC BAA-680 / CLIP 11262), this protein is Peptide chain release factor 3.